We begin with the raw amino-acid sequence, 206 residues long: Thymidylate kinase (206 aa).

14 to 21 (GGEGIGKS) is a binding site for ATP.

It belongs to the thymidylate kinase family.

It carries out the reaction dTMP + ATP = dTDP + ADP. In terms of biological role, phosphorylation of dTMP to form dTDP in both de novo and salvage pathways of dTTP synthesis. This Rickettsia bellii (strain OSU 85-389) protein is Thymidylate kinase.